Reading from the N-terminus, the 107-residue chain is Iron-binding protein IscA (107 aa).

Fe cation is bound by residues Cys35, Cys99, and Cys101.

It belongs to the HesB/IscA family. In terms of assembly, homodimer; may form tetramers and higher multimers. Fe cation is required as a cofactor.

Its function is as follows. Is able to transfer iron-sulfur clusters to apo-ferredoxin. Multiple cycles of [2Fe2S] cluster formation and transfer are observed, suggesting that IscA acts catalytically. Recruits intracellular free iron so as to provide iron for the assembly of transient iron-sulfur cluster in IscU in the presence of IscS, L-cysteine and the thioredoxin reductase system TrxA/TrxB. This Xenorhabdus nematophila (strain ATCC 19061 / DSM 3370 / CCUG 14189 / LMG 1036 / NCIMB 9965 / AN6) protein is Iron-binding protein IscA.